The primary structure comprises 82 residues: Large ribosomal subunit protein bL31B (82 aa).

Belongs to the bacterial ribosomal protein bL31 family. Type B subfamily. Part of the 50S ribosomal subunit.

The polypeptide is Large ribosomal subunit protein bL31B (Amoebophilus asiaticus (strain 5a2)).